The chain runs to 386 residues: Ovalbumin (386 aa).

An N-acetylglycine modification is found at glycine 2. The not cleaved signal peptide spans 22-48; it reads HHANENIFYCPIAIMSALAMVYLGAKD. Serine 69 is subject to Phosphoserine. Residues cysteine 74 and cysteine 121 are joined by a disulfide bond. Glutamate 192 is a binding site for Ca(2+). A glycan (N-linked (GlcNAc...) asparagine) is linked at asparagine 293. Phosphoserine is present on serine 345.

The protein belongs to the serpin family. Ov-serpin subfamily. In terms of assembly, homodimer. Undergoes proteolytic cleavage first at the canonical P1-P1' site, and then at the P8-P7 site by subtilisin. In terms of tissue distribution, major protein of egg white. Expressed in the magnum of the oviduct (at protein level).

It is found in the secreted. Its function is as follows. Non-inhibitory serpin. Storage protein of egg white. The sequence is that of Ovalbumin (SERPINB14) from Gallus gallus (Chicken).